The sequence spans 238 residues: Probable septum site-determining protein MinC (238 aa).

This sequence belongs to the MinC family. As to quaternary structure, interacts with MinD and FtsZ.

Cell division inhibitor that blocks the formation of polar Z ring septums. Rapidly oscillates between the poles of the cell to destabilize FtsZ filaments that have formed before they mature into polar Z rings. Prevents FtsZ polymerization. The polypeptide is Probable septum site-determining protein MinC (Xylella fastidiosa (strain M23)).